The sequence spans 236 residues: Large ribosomal subunit protein uL1 (236 aa).

It belongs to the universal ribosomal protein uL1 family. As to quaternary structure, part of the 50S ribosomal subunit.

Binds directly to 23S rRNA. The L1 stalk is quite mobile in the ribosome, and is involved in E site tRNA release. Its function is as follows. Protein L1 is also a translational repressor protein, it controls the translation of the L11 operon by binding to its mRNA. The protein is Large ribosomal subunit protein uL1 of Acidobacterium capsulatum (strain ATCC 51196 / DSM 11244 / BCRC 80197 / JCM 7670 / NBRC 15755 / NCIMB 13165 / 161).